A 214-amino-acid chain; its full sequence is ATP phosphoribosyltransferase (214 aa).

The protein belongs to the ATP phosphoribosyltransferase family. Short subfamily. As to quaternary structure, heteromultimer composed of HisG and HisZ subunits.

The protein resides in the cytoplasm. The enzyme catalyses 1-(5-phospho-beta-D-ribosyl)-ATP + diphosphate = 5-phospho-alpha-D-ribose 1-diphosphate + ATP. It functions in the pathway amino-acid biosynthesis; L-histidine biosynthesis; L-histidine from 5-phospho-alpha-D-ribose 1-diphosphate: step 1/9. Functionally, catalyzes the condensation of ATP and 5-phosphoribose 1-diphosphate to form N'-(5'-phosphoribosyl)-ATP (PR-ATP). Has a crucial role in the pathway because the rate of histidine biosynthesis seems to be controlled primarily by regulation of HisG enzymatic activity. This Methylibium petroleiphilum (strain ATCC BAA-1232 / LMG 22953 / PM1) protein is ATP phosphoribosyltransferase.